The following is an 89-amino-acid chain: Small ribosomal subunit protein uS17 (89 aa).

This sequence belongs to the universal ribosomal protein uS17 family. As to quaternary structure, part of the 30S ribosomal subunit.

Its function is as follows. One of the primary rRNA binding proteins, it binds specifically to the 5'-end of 16S ribosomal RNA. This chain is Small ribosomal subunit protein uS17, found in Polaromonas naphthalenivorans (strain CJ2).